A 35-amino-acid chain; its full sequence is Beta-theraphotoxin-Hlv1a (35 aa).

3 disulfides stabilise this stretch: C2/C17, C9/C24, and C16/C31.

Belongs to the neurotoxin 10 (Hwtx-1) family. 10 (haplotoxin-1) subfamily. As to expression, expressed by the venom gland.

The protein localises to the secreted. Its function is as follows. Spider venom neurotoxin that blocks voltage-gated sodium channel Nav1.3/SCN3A in human (IC(50)=1 uM) and rat (IC(50)=1 uM). The sequence is that of Beta-theraphotoxin-Hlv1a from Cyriopagopus lividus (Cobalt blue tarantula).